The following is a 525-amino-acid chain: Ent-kaurene oxidase (525 aa).

A helical transmembrane segment spans residues 31 to 51 (VHWLIYVAFGAWLCSYVIHVL). Position 466 (Cys-466) interacts with heme.

It belongs to the cytochrome P450 family. Requires heme as cofactor.

Its subcellular location is the membrane. It catalyses the reaction ent-kaur-16-ene + 3 reduced [NADPH--hemoprotein reductase] + 3 O2 = ent-kaur-16-en-19-oate + 3 oxidized [NADPH--hemoprotein reductase] + 4 H2O + 4 H(+). It participates in plant hormone biosynthesis; gibberellin biosynthesis. Functionally, catalyzes three successive oxidations of the 4-methyl group of ent-kaurene giving kaurenoic acid, a key step in gibberellin (GA) biosynthesis. The sequence is that of Ent-kaurene oxidase (CYP503A1) from Gibberella intermedia (Bulb rot disease fungus).